Consider the following 284-residue polypeptide: Pseudomurein endoisopeptidase PeiW (284 aa).

4 pseudomurein-binding repeat regions span residues 4-31 (GLNE…YVTT), 34-65 (GYKV…YISI), 70-100 (NGKI…NIIY), and 106-137 (SDHV…YISI). Active-site residues include cysteine 198, histidine 233, and aspartate 250.

The protein belongs to the Psimunavirus Pseudomurein endoisopeptidase family. As to quaternary structure, monomer. It depends on Ca(2+) as a cofactor. The cofactor is Mg(2+).

Its function is as follows. Cysteine protease that cleaves the cell wall of its host methanogen under hydrogen limitation of the latter (autolysis). Cleaves the epsilon-Ala-Lys isopeptide bond in the oligopeptides of pseudomurein. This is Pseudomurein endoisopeptidase PeiW (peiW) from Methanothermobacter phage psiM100.